The chain runs to 227 residues: Fibrillarin-like rRNA/tRNA 2'-O-methyltransferase (227 aa).

S-adenosyl-L-methionine-binding positions include 82–83 (TT), 100–101 (EF), 125–126 (DA), and 145–148 (DVAQ).

The protein belongs to the methyltransferase superfamily. Fibrillarin family. As to quaternary structure, interacts with nop5. Component of box C/D small ribonucleoprotein (sRNP) particles that contain rpl7ae, FlpA and nop5, plus a guide RNA.

Functionally, involved in pre-rRNA and tRNA processing. Utilizes the methyl donor S-adenosyl-L-methionine to catalyze the site-specific 2'-hydroxyl methylation of ribose moieties in rRNA and tRNA. Site specificity is provided by a guide RNA that base pairs with the substrate. Methylation occurs at a characteristic distance from the sequence involved in base pairing with the guide RNA. The protein is Fibrillarin-like rRNA/tRNA 2'-O-methyltransferase of Methanosarcina acetivorans (strain ATCC 35395 / DSM 2834 / JCM 12185 / C2A).